Reading from the N-terminus, the 381-residue chain is Pentraxin-related protein PTX3 (381 aa).

Residues 1-17 form the signal peptide; it reads MHLPAILLCALWSAVVA. 2 disulfide bridges follow: Cys-179/Cys-357 and Cys-210/Cys-271. One can recognise a Pentraxin (PTX) domain in the interval 179–381; that stretch reads CETAIFFPMR…QAHGGAQYVS (203 aa). An N-linked (GlcNAc...) asparagine glycan is attached at Asn-220.

As to quaternary structure, homooctamer; disulfide-linked. Binds to C1q.

The protein resides in the secreted. Functionally, plays a role in the regulation of innate resistance to pathogens, inflammatory reactions, possibly clearance of self-components and female fertility. In Mus musculus (Mouse), this protein is Pentraxin-related protein PTX3 (Ptx3).